The chain runs to 448 residues: Fibulin-5 (448 aa).

The first 23 residues, 1-23 (MPGIKRILTVTILALCLPSPGNA), serve as a signal peptide directing secretion. The EGF-like 1; calcium-binding domain maps to 42–82 (DIDECRTIPEACRGDMMCVNQNGGYLCIPRTNPVYRGPYSN). Disulfide bonds link cysteine 46–cysteine 59, cysteine 53–cysteine 68, cysteine 131–cysteine 144, cysteine 138–cysteine 153, cysteine 155–cysteine 166, cysteine 172–cysteine 181, cysteine 177–cysteine 190, cysteine 192–cysteine 205, cysteine 211–cysteine 221, cysteine 217–cysteine 230, cysteine 232–cysteine 245, cysteine 251–cysteine 262, cysteine 258–cysteine 271, cysteine 273–cysteine 286, cysteine 292–cysteine 305, cysteine 299–cysteine 314, and cysteine 320–cysteine 332. The short motif at 54 to 56 (RGD) is the Cell attachment site element. One can recognise an EGF-like 2; calcium-binding domain in the interval 127-167 (DVDECATDSHQCNPTQICINTEGGYTCSCTDGYWLLEGQCL). An EGF-like 3; calcium-binding domain is found at 168–206 (DIDECRYGYCQQLCANVPGSYSCTCNPGFTLNEDGRSCQ). Positions 207–246 (DVNECATENPCVQTCVNTYGSFICRCDPGYELEEDGVHCS) constitute an EGF-like 4; calcium-binding domain. An interaction with LOXL1 region spans residues 245-448 (CSDMDECSFS…LRIYVSQYPF (204 aa)). Residues 247–287 (DMDECSFSEFLCQHECVNQPGTYFCSCPPGYILLDDNRSCQ) enclose the EGF-like 5; calcium-binding domain. Asparagine 283 and asparagine 296 each carry an N-linked (GlcNAc...) asparagine glycan. An EGF-like 6; calcium-binding domain is found at 288–333 (DINECEHRNHTCNLQQTCYNLQGGFKCIDPIRCEEPYLRISDNRCM).

The protein belongs to the fibulin family. In terms of assembly, homodimer. Monomer, homodimerizes in presence of Ca(2+). Interacts with ELN. Interacts (via N-terminus) with the integrins ITGAV/ITGB3, ITGAV/ITGB5 and ITGA9/ITGB1. Interacts with FBN1 (via N-terminal domain). Forms a ternary complex with ELN and FBN1. Interacts with EFEMP2 with moderate affinity. Interacts with LOXL1. N-glycosylated. As to expression, expressed in skin fibroblasts (at protein level). Expressed predominantly in heart, ovary, and colon but also in kidney, pancreas, testis, lung and placenta. Not detectable in brain, liver, thymus, prostate, or peripheral blood leukocytes.

The protein resides in the secreted. The protein localises to the extracellular space. It is found in the extracellular matrix. In terms of biological role, essential for elastic fiber formation, is involved in the assembly of continuous elastin (ELN) polymer and promotes the interaction of microfibrils and ELN. Stabilizes and organizes elastic fibers in the skin, lung and vasculature. Promotes adhesion of endothelial cells through interaction of integrins and the RGD motif. Vascular ligand for integrin receptors which may play a role in vascular development and remodeling. May act as an adapter that mediates the interaction between FBN1 and ELN. The polypeptide is Fibulin-5 (FBLN5) (Homo sapiens (Human)).